The sequence spans 97 residues: NADH-ubiquinone oxidoreductase chain 4L (97 aa).

3 consecutive transmembrane segments (helical) span residues 1–21 (MSYLILSIVILLIGILGIILN), 25–45 (LIIMLMCVELVLLASTILLLF), and 57–77 (IFAIVILTVAAAESAIGLAIM).

The protein belongs to the complex I subunit 4L family.

It is found in the mitochondrion membrane. The enzyme catalyses a ubiquinone + NADH + 5 H(+)(in) = a ubiquinol + NAD(+) + 4 H(+)(out). In terms of biological role, core subunit of the mitochondrial membrane respiratory chain NADH dehydrogenase (Complex I) that is believed to belong to the minimal assembly required for catalysis. Complex I functions in the transfer of electrons from NADH to the respiratory chain. The immediate electron acceptor for the enzyme is believed to be ubiquinone. This is NADH-ubiquinone oxidoreductase chain 4L (ND4L) from Sarcophyton glaucum (Toadstool umbrella leather coral).